Consider the following 86-residue polypeptide: UPF0297 protein SH1302 (86 aa).

This sequence belongs to the UPF0297 family.

The protein is UPF0297 protein SH1302 of Staphylococcus haemolyticus (strain JCSC1435).